The chain runs to 275 residues: Putative ABC transporter permease protein ORF2 (275 aa).

6 consecutive transmembrane segments (helical) span residues Tyr11–Phe31, Ile74–Phe94, Leu108–Thr128, Thr136–Leu156, Ile185–Leu205, and Ile239–Phe259. Positions Leu69–Gly260 constitute an ABC transmembrane type-1 domain.

Belongs to the binding-protein-dependent transport system permease family. MalFG subfamily.

It is found in the cell membrane. This Caldicellulosiruptor sp. (strain Rt8B.4) protein is Putative ABC transporter permease protein ORF2.